A 197-amino-acid polypeptide reads, in one-letter code: Pinin homolog 1 (197 aa).

The disordered stretch occupies residues 30–73 (LDGKVNNEDSHMEIDQPEGSMEEDDHRQVKEKNTSENSVEQKRG). Basic and acidic residues-rich tracts occupy residues 34–43 (VNNEDSHMEI) and 53–71 (DDHR…VEQK).

The protein belongs to the pinin family.

Its subcellular location is the nucleus. The protein localises to the cytoplasm. Transcriptional activator that may participate in the regulation of mRNA splicing. The sequence is that of Pinin homolog 1 (pnn1) from Schizosaccharomyces pombe (strain 972 / ATCC 24843) (Fission yeast).